The sequence spans 264 residues: Putative ankyrin repeat domain-containing protein 19 (264 aa).

ANK repeat units lie at residues 67–96 (KDRT…QINI), 100–129 (LNRT…NPNI), 133–162 (YSNT…NIEA), 166–195 (EGNT…NLHA), and 199–228 (FRRT…NIFS).

In Homo sapiens (Human), this protein is Putative ankyrin repeat domain-containing protein 19 (ANKRD19P).